We begin with the raw amino-acid sequence, 294 residues long: MPSLKDLKNRIASVKATQKITKAMKMVAAAKLRRAQEAAEAARPYSQRMGAVLANIAKAVTDADGAPTLMTGTGKDQVHLLVVCTAERGLCGGFNSQIARFARDHVRKLVAEGKTVKIFTVGKKGYDILRREYASLIIERKELRDVKRIGFENADQIGKRIIDMYAAGEFDVCTLFYSEFKSVISQIPTAQQLIPASTGAVQAEDAAHAGAVYEYEPDPASILEDLIPRNISVQIFRALLENVAGEMGAKMSAMDNATRNAGEMINKLTLSYNRQRQAQITKELIEIISGAEAL.

This sequence belongs to the ATPase gamma chain family. In terms of assembly, F-type ATPases have 2 components, CF(1) - the catalytic core - and CF(0) - the membrane proton channel. CF(1) has five subunits: alpha(3), beta(3), gamma(1), delta(1), epsilon(1). CF(0) has three main subunits: a, b and c.

The protein resides in the cell inner membrane. Functionally, produces ATP from ADP in the presence of a proton gradient across the membrane. The gamma chain is believed to be important in regulating ATPase activity and the flow of protons through the CF(0) complex. This is ATP synthase gamma chain from Rhizobium leguminosarum bv. trifolii (strain WSM2304).